We begin with the raw amino-acid sequence, 89 residues long: MRSAFAVLFLALIAITYSKNYEDVKEEIKNEVENEILKDLEEDVNEFDDNVQEEVNDARPLRRFFRRIRGRKLLPYVPTAIKLWNLGKK.

The N-terminal stretch at 1–18 (MRSAFAVLFLALIAITYS) is a signal peptide. A propeptide spanning residues 19–58 (KNYEDVKEEIKNEVENEILKDLEEDVNEFDDNVQEEVNDA) is cleaved from the precursor. Residue Leu86 is modified to Leucine amide.

Belongs to the arminin family. As to expression, expressed in entodermal epithelium along the body column.

The protein resides in the secreted. Its subcellular location is the target cell membrane. Functionally, antimicrobial peptide with a broad-spectrum antimicrobial activity. Keeps its antibacterial activity under a wide range of salt concentrations that mimic physiological conditions of human blood, which is surprising, since Hydra is an obligate freshwater animal with nearly no salt tolerance. Does not affect red blood cells. This is Arminin 7591 from Hydra vulgaris (Hydra).